We begin with the raw amino-acid sequence, 642 residues long: Bifunctional protein glk (642 aa).

The glucokinase stretch occupies residues 1–340 (MSTGAQSKAV…QLSNRSGGAS (340 aa)). 23–28 (ADVGGT) serves as a coordination point for ATP. An HTH rpiR-type domain is found at 341–417 (SAVFERIRQM…LKLATGLTGT (77 aa)). The interval 341-642 (SAVFERIRQM…SPAAKDVARD (302 aa)) is putative HTH-type transcriptional regulator. A DNA-binding region (H-T-H motif) is located at residues 377 to 396 (IVDIARKADVSQPTVIRFCR). Residues 461-600 (AIEILNGARR…AVGVAIRRAS (140 aa)) enclose the SIS domain. The helical transmembrane segment at 576–596 (SMISRILHLLMIDILAVGVAI) threads the bilayer.

In the N-terminal section; belongs to the bacterial glucokinase family.

Its subcellular location is the membrane. The catalysed reaction is D-glucose + ATP = D-glucose 6-phosphate + ADP + H(+). The sequence is that of Bifunctional protein glk (glk) from Burkholderia orbicola (strain AU 1054).